The sequence spans 204 residues: Ribosomal RNA small subunit methyltransferase G (204 aa).

Residues Gly73, Phe78, and Arg139 each contribute to the S-adenosyl-L-methionine site.

Belongs to the methyltransferase superfamily. RNA methyltransferase RsmG family.

It is found in the cytoplasm. The enzyme catalyses guanosine(527) in 16S rRNA + S-adenosyl-L-methionine = N(7)-methylguanosine(527) in 16S rRNA + S-adenosyl-L-homocysteine. In terms of biological role, specifically methylates the N7 position of guanine in position 527 of 16S rRNA. This chain is Ribosomal RNA small subunit methyltransferase G, found in Coxiella burnetii (strain Dugway 5J108-111).